Consider the following 86-residue polypeptide: Small ribosomal subunit protein bS20 (86 aa).

The interval 1-21 (MANTKSAIKAARKSLRLHDRN) is disordered.

It belongs to the bacterial ribosomal protein bS20 family.

Binds directly to 16S ribosomal RNA. In Opitutus terrae (strain DSM 11246 / JCM 15787 / PB90-1), this protein is Small ribosomal subunit protein bS20.